A 157-amino-acid chain; its full sequence is ATP synthase subunit b' (157 aa).

The helical transmembrane segment at 22–42 threads the bilayer; it reads ATLPIIAVQFLLLVAVLNSLF.

It belongs to the ATPase B chain family. As to quaternary structure, F-type ATPases have 2 components, F(1) - the catalytic core - and F(0) - the membrane proton channel. F(1) has five subunits: alpha(3), beta(3), gamma(1), delta(1), epsilon(1). F(0) has four main subunits: a(1), b(1), b'(1) and c(10-14). The alpha and beta chains form an alternating ring which encloses part of the gamma chain. F(1) is attached to F(0) by a central stalk formed by the gamma and epsilon chains, while a peripheral stalk is formed by the delta, b and b' chains.

It localises to the cellular thylakoid membrane. Its function is as follows. F(1)F(0) ATP synthase produces ATP from ADP in the presence of a proton or sodium gradient. F-type ATPases consist of two structural domains, F(1) containing the extramembraneous catalytic core and F(0) containing the membrane proton channel, linked together by a central stalk and a peripheral stalk. During catalysis, ATP synthesis in the catalytic domain of F(1) is coupled via a rotary mechanism of the central stalk subunits to proton translocation. In terms of biological role, component of the F(0) channel, it forms part of the peripheral stalk, linking F(1) to F(0). The b'-subunit is a diverged and duplicated form of b found in plants and photosynthetic bacteria. This chain is ATP synthase subunit b', found in Synechococcus sp. (strain JA-3-3Ab) (Cyanobacteria bacterium Yellowstone A-Prime).